The chain runs to 417 residues: Probable tubulin polyglutamylase ttll-9 (417 aa).

One can recognise a TTL domain in the interval 23–372 (QRKKKILFKC…EKKLIGNENE (350 aa)). ATP is bound by residues 188–191 (QCYV), K201, and D203.

The protein belongs to the tubulin--tyrosine ligase family. Expressed in head sensory neurons.

Functionally, polyglutamylase that forms polyglutamate side chains on tubulin. Acts when complexed with other proteins. Appears to be dispensable for polar spindle formation in dividing embryonic cells, for cilia-dependent osmotic avoidance and for male mating behavior. Probably by regulating microtubule stability via the glutamylation of tubulin, regulates PLM axon developmental growth. The polypeptide is Probable tubulin polyglutamylase ttll-9 (Caenorhabditis elegans).